We begin with the raw amino-acid sequence, 168 residues long: MIRLMGIDPGLRFMGWGIIDVDGNHLKHVASGVIGTDGSESVPLRLCELHGALKKLIREYAPAEAAVEETYVNRNGSSTLKLGYARGVALLTPAYEGLPVAEYGAMTVKKSVVGTGSASKEQVTMMVKRLLPGAEIRKADASDALAVAICHAHHRASAAHVVAGKRMA.

Catalysis depends on residues D8, E68, and D140. Residues D8, E68, and D140 each contribute to the Mg(2+) site.

The protein belongs to the RuvC family. As to quaternary structure, homodimer which binds Holliday junction (HJ) DNA. The HJ becomes 2-fold symmetrical on binding to RuvC with unstacked arms; it has a different conformation from HJ DNA in complex with RuvA. In the full resolvosome a probable DNA-RuvA(4)-RuvB(12)-RuvC(2) complex forms which resolves the HJ. Mg(2+) serves as cofactor.

Its subcellular location is the cytoplasm. It carries out the reaction Endonucleolytic cleavage at a junction such as a reciprocal single-stranded crossover between two homologous DNA duplexes (Holliday junction).. In terms of biological role, the RuvA-RuvB-RuvC complex processes Holliday junction (HJ) DNA during genetic recombination and DNA repair. Endonuclease that resolves HJ intermediates. Cleaves cruciform DNA by making single-stranded nicks across the HJ at symmetrical positions within the homologous arms, yielding a 5'-phosphate and a 3'-hydroxyl group; requires a central core of homology in the junction. The consensus cleavage sequence is 5'-(A/T)TT(C/G)-3'. Cleavage occurs on the 3'-side of the TT dinucleotide at the point of strand exchange. HJ branch migration catalyzed by RuvA-RuvB allows RuvC to scan DNA until it finds its consensus sequence, where it cleaves and resolves the cruciform DNA. This is Crossover junction endodeoxyribonuclease RuvC from Gluconobacter oxydans (strain 621H) (Gluconobacter suboxydans).